The chain runs to 442 residues: MKEQKKVFIKTLGCQMNEYDSARMHEVLNEHFDTVKTDDYKDADIILINTCSIREKAQEKVFHELGRWKGIKKTNEDLIIGVGGCVASQEGENIIKRAPFVDLVFGPQTIHRLPEMIKQKQKSQQSQVDISFPEVEKFDYLPEPKAEGAKAYVSIMEGCDKYCSYCVVPYTRGPEVNRPFEDVLAECAILAEQGVKEITLLGQNVNHYLGPMENGQTADLALLIHFIAEIDGIERIRFTTSHPVEFSQNLIDAYATVPELANHLHLPVQHGSDRILINMKRNHTILEFKQKIRKLRAIRPDITISSDFIVGFPGETEEDFQKLLDLVKEINFDQSFSFIYSKRPGTPAADLPDDTPMEVKKDRLKRLQDLLNSNAQIISRQMVGTNQRILVDGTSKKDDNILSGRTENNRVVNFKGDKSLIGQFAMVKITESLPNSLRGELI.

An MTTase N-terminal domain is found at 5 to 122; sequence KKVFIKTLGC…LPEMIKQKQK (118 aa). Residues C14, C51, C85, C159, C163, and C166 each contribute to the [4Fe-4S] cluster site. The region spanning 145 to 378 is the Radical SAM core domain; the sequence is KAEGAKAYVS…DLLNSNAQII (234 aa). In terms of domain architecture, TRAM spans 380 to 442; sequence RQMVGTNQRI…LPNSLRGELI (63 aa).

Belongs to the methylthiotransferase family. MiaB subfamily. As to quaternary structure, monomer. [4Fe-4S] cluster serves as cofactor.

It is found in the cytoplasm. The enzyme catalyses N(6)-dimethylallyladenosine(37) in tRNA + (sulfur carrier)-SH + AH2 + 2 S-adenosyl-L-methionine = 2-methylsulfanyl-N(6)-dimethylallyladenosine(37) in tRNA + (sulfur carrier)-H + 5'-deoxyadenosine + L-methionine + A + S-adenosyl-L-homocysteine + 2 H(+). In terms of biological role, catalyzes the methylthiolation of N6-(dimethylallyl)adenosine (i(6)A), leading to the formation of 2-methylthio-N6-(dimethylallyl)adenosine (ms(2)i(6)A) at position 37 in tRNAs that read codons beginning with uridine. The sequence is that of tRNA-2-methylthio-N(6)-dimethylallyladenosine synthase from Francisella tularensis subsp. holarctica (strain LVS).